The primary structure comprises 1345 residues: Rho guanine nucleotide exchange factor 10 (1345 aa).

Disordered stretches follow at residues 1–84 and 99–120; these read MEQG…PAKL and TPLQ…GVGL. Positions 22–39 are enriched in acidic residues; the sequence is NNEEEGELFDFDSGDEVP. The segment covering 40 to 54 has biased composition (basic and acidic residues); that stretch reads EADRQVPSADDRTRG. Polar residues predominate over residues 102–111; that stretch reads QEDQPSSPDA. Phosphoserine is present on Ser-157. Disordered regions lie at residues 158–195 and 207–273; these read VEEE…SALA and MENP…IPRS. A compositionally biased stretch (polar residues) spans 171 to 191; that stretch reads QCNSLSSEDLPHSSEQGSQEG. Over residues 224–239 the composition is skewed to acidic residues; the sequence is DSEPDEMIYDDVENGE. Positions 242–255 are enriched in low complexity; that stretch reads GNSSPEYGWSSSEF. Residues 307–335 are a coiled coil; the sequence is GAMEIQQAKQRQERKMQKLMKAAKEGTKD. The residue at position 355 (Ser-355) is a Phosphoserine. Residues 397 to 584 form the DH domain; the sequence is VRRYILGSIV…ETLAEKLNER (188 aa). Disordered regions lie at residues 1202 to 1237 and 1253 to 1306; these read DRAR…QPDT and KNDL…RASS. Over residues 1256 to 1271 the composition is skewed to low complexity; the sequence is LSSSSGSLNLSHGSSS. Ser-1262 is modified (phosphoserine). Gln-1314 carries the post-translational modification N5-methylglutamine.

Methylated at Gln-1314 by N6AMT1. In terms of tissue distribution, ubiquitously expressed.

Its function is as follows. May play a role in developmental myelination of peripheral nerves. This Mus musculus (Mouse) protein is Rho guanine nucleotide exchange factor 10 (Arhgef10).